Here is a 352-residue protein sequence, read N- to C-terminus: MSKDNRLASILLQPVASSSGNCTEFHDSKLHTLQEELNFLPLEGVASNVCPPMFRGHKNYVFVLYCLNQVDLVTNLQDSTKRYYPLQIFKDCQLSSLVQKDFSHYFQLSRQKEGEDRNDSDTTLVNVVNSGVSRHRSQLLKMCIIPRICSFDKSNSKTYKLIQEYVNRFETVLTKFGPEKDFTKVYANWSKLIESFNELILHDLLVKWQQWSELTQPNATVHQNIPNVLRELVIKLTQRYFTFQPSYSCSIDEFTTILLNKNALSLLDVFRKPRKYKLNFGLWLDCQNGILIFTNGIVQMADEITSERVKSFVRPAHLLVLEDHSNDEAVKKLMFFTFSAILQCFTDEILNC.

Interacts with MPS3.

The protein resides in the nucleus. It is found in the chromosome. The protein localises to the telomere. In terms of biological role, required for telomeric clustering (bouquet stage) during meiosis 1 prophase, formation and efficient homolog pairing, meiosis 1 disjunction, and telomere deletion during meiosis. Also promotes meiotic recombination. The protein is Non-disjunction protein 1 (NDJ1) of Saccharomyces cerevisiae (strain ATCC 204508 / S288c) (Baker's yeast).